The sequence spans 347 residues: NADH-ubiquinone oxidoreductase chain 2 (347 aa).

11 helical membrane-spanning segments follow: residues 5 to 22 (ILITITSTVVLGTMIVLF), 26 to 45 (WFMIWVGFEMNMLAIIPILM), 60 to 80 (FLTQATASMLLMLSIIINLLC), 96 to 116 (TMITIALTMKLGLSPFHFWVP), 122 to 142 (ISLSSGMILLTWQKIAPLSIL), 153 to 173 (LLLMMAITSMLVGGWGGLNQT), 178 to 198 (ILAYSSITHMGWMAAIMVYNP), 200 to 220 (LAILNLTIYIMMTLGTFMLFM), 237 to 257 (FPLMAPLILMLMLSLGGLPPL), 274 to 294 (DMIIMPTLMAITALLNLYFYT), and 325 to 345 (LLAPLIVTSTMLLPLTPMLAA).

Belongs to the complex I subunit 2 family. In terms of assembly, core subunit of respiratory chain NADH dehydrogenase (Complex I) which is composed of 45 different subunits. Interacts with TMEM242.

Its subcellular location is the mitochondrion inner membrane. It carries out the reaction a ubiquinone + NADH + 5 H(+)(in) = a ubiquinol + NAD(+) + 4 H(+)(out). In terms of biological role, core subunit of the mitochondrial membrane respiratory chain NADH dehydrogenase (Complex I) which catalyzes electron transfer from NADH through the respiratory chain, using ubiquinone as an electron acceptor. Essential for the catalytic activity and assembly of complex I. The sequence is that of NADH-ubiquinone oxidoreductase chain 2 from Ailuropoda melanoleuca (Giant panda).